The primary structure comprises 202 residues: Glycerol-3-phosphate acyltransferase (202 aa).

The next 6 membrane-spanning stretches (helical) occupy residues 2-22 (MIIV…GFVI), 54-74 (FLVT…PLWL), 85-105 (FFTN…YPVY), 120-140 (VVLG…FIVL), 141-161 (KIFK…VIGS), and 162-182 (LIIQ…ILII).

It belongs to the PlsY family. In terms of assembly, probably interacts with PlsX.

The protein localises to the cell membrane. It carries out the reaction an acyl phosphate + sn-glycerol 3-phosphate = a 1-acyl-sn-glycero-3-phosphate + phosphate. Its pathway is lipid metabolism; phospholipid metabolism. Functionally, catalyzes the transfer of an acyl group from acyl-phosphate (acyl-PO(4)) to glycerol-3-phosphate (G3P) to form lysophosphatidic acid (LPA). This enzyme utilizes acyl-phosphate as fatty acyl donor, but not acyl-CoA or acyl-ACP. In Staphylococcus aureus (strain Mu3 / ATCC 700698), this protein is Glycerol-3-phosphate acyltransferase.